A 560-amino-acid chain; its full sequence is DNA ligase B (560 aa).

The active-site N6-AMP-lysine intermediate is the lysine 124.

Belongs to the NAD-dependent DNA ligase family. LigB subfamily.

It carries out the reaction NAD(+) + (deoxyribonucleotide)n-3'-hydroxyl + 5'-phospho-(deoxyribonucleotide)m = (deoxyribonucleotide)n+m + AMP + beta-nicotinamide D-nucleotide.. Functionally, catalyzes the formation of phosphodiester linkages between 5'-phosphoryl and 3'-hydroxyl groups in double-stranded DNA using NAD as a coenzyme and as the energy source for the reaction. The chain is DNA ligase B from Escherichia coli O1:K1 / APEC.